We begin with the raw amino-acid sequence, 1644 residues long: Kinesin-like protein unc-104 (1644 aa).

One can recognise a Kinesin motor domain in the interval 3 to 351; that stretch reads SVKVAVRVRP…LRYADRAKQI (349 aa). 97 to 104 provides a ligand contact to ATP; it reads GQTGAGKS. A coiled-coil region spans residues 358-436; that stretch reads NEDANAKLIR…IAELNETWEE (79 aa). The FHA domain maps to 499 to 565; that stretch reads TRLGTSEANV…LQTGSRVILG (67 aa). Positions 574 to 591 are enriched in basic and acidic residues; sequence HPEQAREKREKPKDKDVG. The tract at residues 574 to 598 is disordered; it reads HPEQAREKREKPKDKDVGENPGGNA. Residues 631–672 adopt a coiled-coil conformation; sequence EQFKREKLAADQEFEEQRKTYEARIDALQKQVEEQSMTMSMY. Disordered stretches follow at residues 953–985 and 1419–1440; these read EQEDADSGRGDSSVASELHESNEHEPGEHLQPG and HMVIPPSPQTPVKDQQTPTLPE. The segment covering 969–984 has biased composition (basic and acidic residues); sequence ELHESNEHEPGEHLQP. Polar residues predominate over residues 1428–1437; the sequence is TPVKDQQTPT. Positions 1542-1640 constitute a PH domain; it reads VVARKGYLNV…WLYAINPLLA (99 aa).

Belongs to the TRAFAC class myosin-kinesin ATPase superfamily. Kinesin family. Unc-104 subfamily. In terms of assembly, monomer.

It localises to the cytoplasm. The protein localises to the cytoskeleton. Its function is as follows. Required for presynaptic maturation, has a role in axonal transport of dense-core vesicles carrying synaptic vesicle precursors, components required for the morphological transformation of axonal growth cones to mature boutons. This is Kinesin-like protein unc-104 from Aedes aegypti (Yellowfever mosquito).